The following is a 609-amino-acid chain: MSQAQIDTLTSLFDSAIAVLKNDGELPADWQNNSQITRTKDTSHGDFASNIALTAAKAAKANPRQVAEKIVNALPENQDIRQIEIAGPGFINVFLNTEAKFAVLDDIFNLQNGFGLSKQFDGQKIQVEFVSANPTSSLHVGHGRGAAFGMSVSNLLEAIGYDVTREYYVNDAGRQMDILATSTYLRYLETNGETVTFPVNGYQGDYVSDIAQTLKTQHADTYVHRFADIAENVPEDAQFEINADGEKVLLSGDKEAHIDGLIANSKALLGNGYELFLNAALSSILADIKDDLNDFGVSYECWFSERSIDSEIEPVLQILEDKGYLYEKDGNIWFKSTDFGDEKDRVVRRANGQSTYFASDIAYHKNKFDRGFDKVVNVWGADHHGYVPRVKAALLALGIDADRLDVVLVQFVALWRGDEKVQMSSRSGKFVTLRELRHEVGNDAARFYYVARKPEVHVDFDLELAKSQSKDNLVYYIQYAHARVCRVLEKLETSGLSVDDAIGAAQQELLVAPSEEELIKLLAAYPATLMRSATGYEPHILTNYLKELAALFHGWYDSNRILPVSLTSGETPSADEMAMMQARLRLSKAVRQVISNGLGLLGLSAPSSM.

The short motif at 132-142 is the 'HIGH' region element; the sequence is ANPTSSLHVGH.

It belongs to the class-I aminoacyl-tRNA synthetase family. As to quaternary structure, monomer.

It is found in the cytoplasm. The enzyme catalyses tRNA(Arg) + L-arginine + ATP = L-arginyl-tRNA(Arg) + AMP + diphosphate. This is Arginine--tRNA ligase from Psychrobacter cryohalolentis (strain ATCC BAA-1226 / DSM 17306 / VKM B-2378 / K5).